A 197-amino-acid chain; its full sequence is Glycerol-3-phosphate acyltransferase (197 aa).

5 helical membrane-spanning segments follow: residues 7 to 27 (PSIAALIGYAFGSIPFGLLLT), 56 to 76 (LAALTLVLDLVKGFVPVWIAW), 82 to 102 (DIGWAALGAVVGHCFPIWLGF), 116 to 136 (FGLGWGIGLAYAFVWLVMLAI), and 157 to 177 (YFGRPTFVPPLVIIAVIIIWL).

The protein belongs to the PlsY family. In terms of assembly, probably interacts with PlsX.

The protein resides in the cell inner membrane. The catalysed reaction is an acyl phosphate + sn-glycerol 3-phosphate = a 1-acyl-sn-glycero-3-phosphate + phosphate. It participates in lipid metabolism; phospholipid metabolism. Functionally, catalyzes the transfer of an acyl group from acyl-phosphate (acyl-PO(4)) to glycerol-3-phosphate (G3P) to form lysophosphatidic acid (LPA). This enzyme utilizes acyl-phosphate as fatty acyl donor, but not acyl-CoA or acyl-ACP. The polypeptide is Glycerol-3-phosphate acyltransferase (Erythrobacter litoralis (strain HTCC2594)).